The following is a 79-amino-acid chain: RNA-binding protein Hfq (79 aa).

One can recognise a Sm domain in the interval 10–69; that stretch reads DPFLNALRKEHVPVSIYLVNGIKLQGNIESFDQYVVLLRNTVTQMVYKHAISTVVPARPV.

The protein belongs to the Hfq family. Homohexamer.

RNA chaperone that binds small regulatory RNA (sRNAs) and mRNAs to facilitate mRNA translational regulation in response to envelope stress, environmental stress and changes in metabolite concentrations. Also binds with high specificity to tRNAs. This is RNA-binding protein Hfq from Burkholderia mallei (strain ATCC 23344).